The sequence spans 179 residues: Bifunctional protein PyrR (179 aa).

The PRPP-binding signature appears at 97–109 (IILTDDVLYTGRT).

The protein belongs to the purine/pyrimidine phosphoribosyltransferase family. PyrR subfamily.

It catalyses the reaction UMP + diphosphate = 5-phospho-alpha-D-ribose 1-diphosphate + uracil. In terms of biological role, regulates the transcription of the pyrimidine nucleotide (pyr) operon in response to exogenous pyrimidines. Its function is as follows. Also displays a weak uracil phosphoribosyltransferase activity which is not physiologically significant. In Elusimicrobium minutum (strain Pei191), this protein is Bifunctional protein PyrR.